Here is a 147-residue protein sequence, read N- to C-terminus: DNA-directed RNA polymerase I subunit rpa14 (147 aa).

A disordered region spans residues Val-71 to Ser-147. A compositionally biased stretch (low complexity) spans Pro-74 to Glu-84. The span at Leu-87 to Thr-111 shows a compositional bias: basic and acidic residues. Residues Lys-112–Arg-124 show a composition bias toward basic residues. Over residues Arg-125–Ala-135 the composition is skewed to basic and acidic residues.

In terms of assembly, component of the RNA polymerase I (Pol I) complex consisting of 14 subunits. Part of a Pol I subcomplex consisting of the subunits A14 and A43. Interacts with rpa43. Phosphorylated.

It localises to the nucleus. It is found in the nucleolus. Its function is as follows. DNA-dependent RNA polymerase catalyzes the transcription of DNA into RNA using the four ribonucleoside triphosphates as substrates. Component of RNA polymerase I which synthesizes ribosomal RNA precursors. A14 seems to play a role in the stability of Pol I subunit A43 and association of rrn3 to Pol I. The polypeptide is DNA-directed RNA polymerase I subunit rpa14 (ker1) (Schizosaccharomyces pombe (strain 972 / ATCC 24843) (Fission yeast)).